Here is a 549-residue protein sequence, read N- to C-terminus: MKNINPTQTSAWQALQKHYDEMKDVTIAELFANDSDRFAKFSATFDDLMLVDFSKNRITEETLAKLQDLAKLQDLAGAIKSMFSGEKINRTEDRAVLHVALRNRSNTPIIVDGKDVMPEVNAVLEKMKTFSQAIISGQWKGYTGKAITDVVNIGIGGSDLGPFMVTEALRPYKNHLTMHFVSNVDGTHIAEVLKKVNPETTLFLVASKTFTTQETMTNAHSARDWFLKTAGDEKHVAKHFAALSTNAKAVGEFGIDTANMFEFWDWVGGRYSLWSAIGLSIILSVGFDNFVELLSGAHAMDKHFSTTPAEKNLPILLALIGIWYNNFFGAETEAILPYDQYMHRFAAYFQQGNMESNGKYVDRNGNAVDYQTGPIIWGEPGTNGQHAFYQLIHQGTKMVPCDFIAPAITHNPLSDHHQKLLSNFFAQTEALAFGKSREVVEQEYRDQGKDPAQLEHVVPFKVFEGNRPTNSILLREITPFSLGALIALYEHKIFTQGAILNIFTFDQWGVELGKQLANRILPELGDDKAISSHDSSTNGLINRYKAWRA.

Glutamate 355 (proton donor) is an active-site residue. Active-site residues include histidine 386 and lysine 514.

Belongs to the GPI family.

Its subcellular location is the cytoplasm. The enzyme catalyses alpha-D-glucose 6-phosphate = beta-D-fructose 6-phosphate. It functions in the pathway carbohydrate biosynthesis; gluconeogenesis. The protein operates within carbohydrate degradation; glycolysis; D-glyceraldehyde 3-phosphate and glycerone phosphate from D-glucose: step 2/4. Its function is as follows. Catalyzes the reversible isomerization of glucose-6-phosphate to fructose-6-phosphate. The sequence is that of Glucose-6-phosphate isomerase from Salmonella gallinarum (strain 287/91 / NCTC 13346).